The sequence spans 347 residues: Ubiquinone biosynthesis protein coq-4, mitochondrial (347 aa).

A mitochondrion-targeting transit peptide spans 1 to 49; sequence MEVTALRRSAALVARASSQNAIRPAVCAAISSTSPTPPTQIQTQQTRQF. His-185, Asp-186, His-189, and Glu-201 together coordinate Zn(2+). Residues 284-310 are disordered; it reads IRKREREEKRRRKEMERMLSGRGTEDV.

Belongs to the COQ4 family. As to quaternary structure, component of a multi-subunit COQ enzyme complex, composed of at least coq-3, coq-4, coq-5, coq-6, coq-7 and coq-9. The cofactor is Zn(2+).

The protein resides in the mitochondrion inner membrane. It carries out the reaction a 4-hydroxy-3-methoxy-5-(all-trans-polyprenyl)benzoate + H(+) = a 2-methoxy-6-(all-trans-polyprenyl)phenol + CO2. It participates in cofactor biosynthesis; ubiquinone biosynthesis. Functionally, lyase that catalyzes the C1-decarboxylation of 4-hydroxy-3-methoxy-5-(all-trans-polyprenyl)benzoic acid into 2-methoxy-6-(all-trans-polyprenyl)phenol during ubiquinone biosynthesis. The polypeptide is Ubiquinone biosynthesis protein coq-4, mitochondrial (Neurospora crassa (strain ATCC 24698 / 74-OR23-1A / CBS 708.71 / DSM 1257 / FGSC 987)).